A 308-amino-acid chain; its full sequence is Porphobilinogen deaminase (308 aa).

S-(dipyrrolylmethanemethyl)cysteine is present on Cys-242.

Belongs to the HMBS family. As to quaternary structure, monomer. It depends on dipyrromethane as a cofactor.

It catalyses the reaction 4 porphobilinogen + H2O = hydroxymethylbilane + 4 NH4(+). It functions in the pathway porphyrin-containing compound metabolism; protoporphyrin-IX biosynthesis; coproporphyrinogen-III from 5-aminolevulinate: step 2/4. Tetrapolymerization of the monopyrrole PBG into the hydroxymethylbilane pre-uroporphyrinogen in several discrete steps. This chain is Porphobilinogen deaminase, found in Alkalilimnicola ehrlichii (strain ATCC BAA-1101 / DSM 17681 / MLHE-1).